The sequence spans 260 residues: Transforming acid coiled-coil-containing protein 1 (260 aa).

Residues 1–43 form a disordered region; the sequence is MSLNTTFTKEDGTEVVIPFNGSQNGHPENEEPEVEEAAEPSSS. Residues 108–249 are a coiled coil; that stretch reads ASSEELEKAL…CDQLLNDVDV (142 aa).

This sequence belongs to the TACC family. Interacts with zyg-9 to form a heterodimer. Interacts with zyg-8 to form a heterodimer. Interacts with efa-6 (via N-terminus). As to expression, expressed in touch neurons.

The protein resides in the cytoplasm. It localises to the cytoskeleton. Its subcellular location is the spindle pole. The protein localises to the microtubule organizing center. It is found in the centrosome. The protein resides in the chromosome. It localises to the centromere. Its subcellular location is the kinetochore. The protein localises to the cell projection. It is found in the axon. The protein resides in the perikaryon. Its function is as follows. Involved in microtubule formation, polymerization and assembly, regulating microtubule nucleation and length. Plays a role in pronuclear migration and mitotic and meiotic spindle elongation during early embryogenesis. In complex with zyg-9, functions during the early stages of embryonic development to regulate microtubule assembly throughout the cell cycle. Specifically, the complex is required for the formation and growth of astral microtubules and spindle microtubules during mitotic spindle assembly. At anaphase, the complex is required for mitotic spindle positioning in one-cell stage embryos. The complex acts in a partially redundant manner with the tac-1/zyg-8 complex to regulate microtubule assembly and processes during interphase, mitosis and meiosis in embryos. Plays a role in injury-induced axonal regrowth, regeneration and microtubule stability in PLM neurons and this may be downstream of efa-6. This Caenorhabditis elegans protein is Transforming acid coiled-coil-containing protein 1.